A 95-amino-acid chain; its full sequence is Toxin HigB-1 (95 aa).

Functionally, toxic component of a type II toxin-antitoxin (TA) system. Inhibits translation by cleavage of mRNA. In Vibrio cholerae serotype O1 (strain ATCC 39315 / El Tor Inaba N16961), this protein is Toxin HigB-1 (higB-1).